Consider the following 624-residue polypeptide: Probable potassium transport system protein Kup (624 aa).

12 consecutive transmembrane segments (helical) span residues 13 to 33 (LALG…LYTM), 52 to 72 (ILSL…VLVI), 102 to 122 (WIIM…SLIT), 139 to 159 (PALH…LFAI), 170 to 190 (LFGP…AIGI), 208 to 228 (FFMT…LAIT), 249 to 269 (WFGF…ALLL), 291 to 311 (MVAL…SGAF), 339 to 359 (IYIP…VLGF), 368 to 388 (AYGI…ALLM), 399 to 419 (TLVA…ANAV), and 421 to 441 (IPEG…ILVT).

The protein belongs to the HAK/KUP transporter (TC 2.A.72) family.

The protein localises to the cell inner membrane. The enzyme catalyses K(+)(in) + H(+)(in) = K(+)(out) + H(+)(out). In terms of biological role, transport of potassium into the cell. Likely operates as a K(+):H(+) symporter. The sequence is that of Probable potassium transport system protein Kup from Thiobacillus denitrificans (strain ATCC 25259 / T1).